We begin with the raw amino-acid sequence, 663 residues long: Protein-arginine deiminase type-1 (663 aa).

Ca(2+) contacts are provided by Asn-153, Asp-155, Asp-157, Asp-165, Asp-176, Asp-179, Gln-351, Glu-353, Lys-364, Asp-371, Ser-372, Asn-375, Phe-409, and Leu-412. The active-site Nucleophile is Cys-645.

The protein belongs to the protein arginine deiminase family. In terms of assembly, monomer. Ca(2+) is required as a cofactor. Detected in epidermal keratinocytes (at protein level). Epidermis, prostate, testis, placenta, spleen and thymus.

The protein localises to the cytoplasm. The enzyme catalyses L-arginyl-[protein] + H2O = L-citrullyl-[protein] + NH4(+). Functionally, catalyzes the deimination of arginine residues of proteins. The sequence is that of Protein-arginine deiminase type-1 (PADI1) from Homo sapiens (Human).